We begin with the raw amino-acid sequence, 213 residues long: Orotate phosphoribosyltransferase (213 aa).

Lys26 serves as a coordination point for 5-phospho-alpha-D-ribose 1-diphosphate. Residue 34–35 (FF) participates in orotate binding. Residues 72 to 73 (YK), Arg99, Lys100, Lys103, His105, and 124 to 132 (DDVITAGTA) each bind 5-phospho-alpha-D-ribose 1-diphosphate. Residues Thr128 and Arg156 each coordinate orotate.

The protein belongs to the purine/pyrimidine phosphoribosyltransferase family. PyrE subfamily. As to quaternary structure, homodimer. Mg(2+) serves as cofactor.

The enzyme catalyses orotidine 5'-phosphate + diphosphate = orotate + 5-phospho-alpha-D-ribose 1-diphosphate. The protein operates within pyrimidine metabolism; UMP biosynthesis via de novo pathway; UMP from orotate: step 1/2. Functionally, catalyzes the transfer of a ribosyl phosphate group from 5-phosphoribose 1-diphosphate to orotate, leading to the formation of orotidine monophosphate (OMP). In Vibrio cholerae serotype O1 (strain ATCC 39315 / El Tor Inaba N16961), this protein is Orotate phosphoribosyltransferase.